Consider the following 274-residue polypeptide: Ribosomal RNA small subunit methyltransferase A (274 aa).

Residues histidine 15, leucine 17, glycine 42, glutamate 64, aspartate 89, and asparagine 109 each coordinate S-adenosyl-L-methionine.

It belongs to the class I-like SAM-binding methyltransferase superfamily. rRNA adenine N(6)-methyltransferase family. RsmA subfamily.

It is found in the cytoplasm. The catalysed reaction is adenosine(1518)/adenosine(1519) in 16S rRNA + 4 S-adenosyl-L-methionine = N(6)-dimethyladenosine(1518)/N(6)-dimethyladenosine(1519) in 16S rRNA + 4 S-adenosyl-L-homocysteine + 4 H(+). Functionally, specifically dimethylates two adjacent adenosines (A1518 and A1519) in the loop of a conserved hairpin near the 3'-end of 16S rRNA in the 30S particle. May play a critical role in biogenesis of 30S subunits. This chain is Ribosomal RNA small subunit methyltransferase A, found in Synechococcus sp. (strain RCC307).